A 362-amino-acid chain; its full sequence is G-protein coupled receptor 6 (362 aa).

Over 1 to 74 (MNASAASLND…PGLLLPAVNP (74 aa)) the chain is Extracellular. 3 N-linked (GlcNAc...) asparagine glycosylation sites follow: asparagine 2, asparagine 9, and asparagine 51. Residues 75–94 (WDVLLCVSGTVIAGENALVV) form a helical membrane-spanning segment. Over 95–106 (ALIASTPALRTP) the chain is Cytoplasmic. A helical membrane pass occupies residues 107 to 130 (MFVLVGSLATADLLAGCGLILHFV). Over 131–142 (FQYLVPSETVSL) the chain is Extracellular. The chain crosses the membrane as a helical span at residues 143–164 (LTVGFLVASFAASVSSLLAITV). Residues 165–185 (DRYLSLYNALTYYSRRTLLGV) are Cytoplasmic-facing. Residues 186 to 205 (HLLLAATWTVSLGLGLLPVL) form a helical membrane-spanning segment. Residues 206 to 230 (GWNCLAERAACSVVRPLARSHVALL) lie on the Extracellular side of the membrane. The chain crosses the membrane as a helical span at residues 231 to 249 (SAAFFMVFGIMLHLYVRIC). Topologically, residues 250–277 (QVVWRHAHQIALQQHCLAPPHLAATRKG) are cytoplasmic. Residues 278-304 (VGTLAVVLGTFGASWLPFAIYCVVGSH) traverse the membrane as a helical segment. Residues 305–309 (EDPAV) are Extracellular-facing. A helical transmembrane segment spans residues 310 to 331 (YTYATLLPATYNSMINPIIYAF). Residues 332 to 362 (RNQEIQRALWLLLCGCFQSKVPFRSRSPSEV) lie on the Cytoplasmic side of the membrane. Residue cysteine 345 is the site of S-palmitoyl cysteine attachment. Phosphoserine is present on residues serine 356, serine 358, and serine 360.

This sequence belongs to the G-protein coupled receptor 1 family.

Its subcellular location is the cell membrane. In terms of biological role, orphan receptor with constitutive G(s) signaling activity that activate cyclic AMP. Promotes neurite outgrowth and blocks myelin inhibition in neurons. The sequence is that of G-protein coupled receptor 6 (GPR6) from Homo sapiens (Human).